The sequence spans 259 residues: Protein unc-50 homolog (259 aa).

An N-acetylmethionine modification is found at M1. The Cytoplasmic portion of the chain corresponds to 1 to 82; it reads MLPSTSVNSL…TKDQWARDDP (82 aa). S6 is modified (phosphoserine). Residues 83-103 traverse the membrane as a helical segment; sequence AFLVLLSIWLCVSTIGFGFVL. Over 104-115 the chain is Lumenal; it reads DMGFFETIKLLL. A helical transmembrane segment spans residues 116 to 136; sequence WVVLIDCVGVGLLIATLMWFI. Over 137–163 the chain is Cytoplasmic; it reads SNKYLVKRQSRDYDVEWGYAFDVHLNA. A helical transmembrane segment spans residues 164-184; it reads FYPLLVILHFIQLFFINHVIL. The Lumenal portion of the chain corresponds to 185–187; that stretch reads TDT. Residues 188-208 form a helical membrane-spanning segment; the sequence is FIGYLVGNTLWLVAVGYYIYV. Topologically, residues 209–222 are cytoplasmic; that stretch reads TFLGYSALPFLKNT. Residues 223–243 form a helical membrane-spanning segment; it reads VILLYPFAPLILLYGLSLALG. At 244–259 the chain is on the lumenal side; sequence WNFTHTLCSFYKYRVK.

The protein belongs to the unc-50 family. As to expression, present in periodontal ligament fibroblasts (at protein level).

It is found in the nucleus inner membrane. The protein localises to the golgi apparatus membrane. Involved in the cell surface expression of neuronal nicotinic receptors. Binds RNA. The chain is Protein unc-50 homolog (UNC50) from Homo sapiens (Human).